The sequence spans 422 residues: Dihydrofolate synthase/folylpolyglutamate synthase (422 aa).

29 to 31 is a 7,8-dihydropteroate binding site; sequence DLG. Position 59–62 (59–62) interacts with ATP; that stretch reads GKGT. Residue S83 participates in Mg(2+) binding. 122–125 lines the 7,8-dihydropteroate pocket; that stretch reads TYFE. Residue E146 coordinates Mg(2+). 153-155 provides a ligand contact to 7,8-dihydropteroate; that stretch reads LDA. Position 173 (H173) interacts with Mg(2+). K188 carries the N6-carboxylysine modification. The ATP site is built by N257, R289, and D302.

It belongs to the folylpolyglutamate synthase family. In terms of assembly, monomer. Requires Mg(2+) as cofactor.

It carries out the reaction 7,8-dihydropteroate + L-glutamate + ATP = 7,8-dihydrofolate + ADP + phosphate + H(+). It catalyses the reaction (6S)-5,6,7,8-tetrahydrofolyl-(gamma-L-Glu)(n) + L-glutamate + ATP = (6S)-5,6,7,8-tetrahydrofolyl-(gamma-L-Glu)(n+1) + ADP + phosphate + H(+). The catalysed reaction is 10-formyltetrahydrofolyl-(gamma-L-Glu)(n) + L-glutamate + ATP = 10-formyltetrahydrofolyl-(gamma-L-Glu)(n+1) + ADP + phosphate + H(+). The enzyme catalyses (6R)-5,10-methylenetetrahydrofolyl-(gamma-L-Glu)(n) + L-glutamate + ATP = (6R)-5,10-methylenetetrahydrofolyl-(gamma-L-Glu)(n+1) + ADP + phosphate + H(+). It functions in the pathway cofactor biosynthesis; tetrahydrofolate biosynthesis; 7,8-dihydrofolate from 2-amino-4-hydroxy-6-hydroxymethyl-7,8-dihydropteridine diphosphate and 4-aminobenzoate: step 2/2. Its pathway is cofactor biosynthesis; tetrahydrofolylpolyglutamate biosynthesis. In terms of biological role, functions in two distinct reactions of the de novo folate biosynthetic pathway. Catalyzes the addition of a glutamate residue to dihydropteroate (7,8-dihydropteroate or H2Pte) to form dihydrofolate (7,8-dihydrofolate monoglutamate or H2Pte-Glu). Also catalyzes successive additions of L-glutamate to tetrahydrofolate or 10-formyltetrahydrofolate or 5,10-methylenetetrahydrofolate, leading to folylpolyglutamate derivatives. This chain is Dihydrofolate synthase/folylpolyglutamate synthase, found in Escherichia coli (strain K12).